We begin with the raw amino-acid sequence, 123 residues long: Large ribosomal subunit protein bL12 (123 aa).

The protein belongs to the bacterial ribosomal protein bL12 family. As to quaternary structure, homodimer. Part of the ribosomal stalk of the 50S ribosomal subunit. Forms a multimeric L10(L12)X complex, where L10 forms an elongated spine to which 2 to 4 L12 dimers bind in a sequential fashion. Binds GTP-bound translation factors.

Its function is as follows. Forms part of the ribosomal stalk which helps the ribosome interact with GTP-bound translation factors. Is thus essential for accurate translation. The protein is Large ribosomal subunit protein bL12 of Roseobacter denitrificans (strain ATCC 33942 / OCh 114) (Erythrobacter sp. (strain OCh 114)).